We begin with the raw amino-acid sequence, 573 residues long: 2-succinyl-5-enolpyruvyl-6-hydroxy-3-cyclohexene-1-carboxylate synthase (573 aa).

This sequence belongs to the TPP enzyme family. MenD subfamily. Homodimer. The cofactor is Mg(2+). Mn(2+) is required as a cofactor. It depends on thiamine diphosphate as a cofactor.

It catalyses the reaction isochorismate + 2-oxoglutarate + H(+) = 5-enolpyruvoyl-6-hydroxy-2-succinyl-cyclohex-3-ene-1-carboxylate + CO2. It participates in quinol/quinone metabolism; 1,4-dihydroxy-2-naphthoate biosynthesis; 1,4-dihydroxy-2-naphthoate from chorismate: step 2/7. Its pathway is quinol/quinone metabolism; menaquinone biosynthesis. Its function is as follows. Catalyzes the thiamine diphosphate-dependent decarboxylation of 2-oxoglutarate and the subsequent addition of the resulting succinic semialdehyde-thiamine pyrophosphate anion to isochorismate to yield 2-succinyl-5-enolpyruvyl-6-hydroxy-3-cyclohexene-1-carboxylate (SEPHCHC). The chain is 2-succinyl-5-enolpyruvyl-6-hydroxy-3-cyclohexene-1-carboxylate synthase from Shewanella sp. (strain W3-18-1).